A 642-amino-acid chain; its full sequence is Threonine--tRNA ligase (642 aa).

The region spanning 1–61 (MPVITLPDGS…ETDAELSIIT (61 aa)) is the TGS domain. A catalytic region spans residues 243 to 534 (DHRKIGKQLD…LIEEYAGRFP (292 aa)). Cysteine 334, histidine 385, and histidine 511 together coordinate Zn(2+).

It belongs to the class-II aminoacyl-tRNA synthetase family. Homodimer. Zn(2+) is required as a cofactor.

The protein localises to the cytoplasm. The catalysed reaction is tRNA(Thr) + L-threonine + ATP = L-threonyl-tRNA(Thr) + AMP + diphosphate + H(+). In terms of biological role, catalyzes the attachment of threonine to tRNA(Thr) in a two-step reaction: L-threonine is first activated by ATP to form Thr-AMP and then transferred to the acceptor end of tRNA(Thr). Also edits incorrectly charged L-seryl-tRNA(Thr). In Shewanella baltica (strain OS155 / ATCC BAA-1091), this protein is Threonine--tRNA ligase.